Here is a 483-residue protein sequence, read N- to C-terminus: AP-3 complex subunit mu (483 aa).

The region spanning 211 to 482 is the MHD domain; sequence NNELYVDLLE…KTQTGNFQVR (272 aa).

It belongs to the adaptor complexes medium subunit family. In terms of assembly, adaptor protein complex 3 (AP-3) is a heterotetramer composed of 2 large adaptins (APL5 and APL6), a medium adaptin (APM3) and a small adaptin (APS3).

It localises to the golgi apparatus. The protein resides in the cytoplasmic vesicle membrane. Part of the AP-3 complex, an adaptor-related complex which is not clathrin-associated. The complex is associated with the Golgi region as well as more peripheral structures. It facilitates the budding of vesicles from the Golgi membrane and may be directly involved in trafficking to the vacuole. Required for the transport via the ALP pathway, which directs the transport of the cargo proteins PHO8 and VAM3 to the vacuole. This is AP-3 complex subunit mu (APM3) from Saccharomyces cerevisiae (strain ATCC 204508 / S288c) (Baker's yeast).